Reading from the N-terminus, the 320-residue chain is Sucrose operon repressor (320 aa).

One can recognise an HTH lacI-type domain in the interval 1–57 (MVAKLTDVAKLAGVSPTTVSRVINRKGYLSEKTITKVQAAMKTLGYKPNNLARSLQG). Residues 5–24 (LTDVAKLAGVSPTTVSRVIN) constitute a DNA-binding region (H-T-H motif).

Functionally, negative regulator of scrB expression. This Streptococcus mutans serotype c (strain ATCC 700610 / UA159) protein is Sucrose operon repressor (scrR).